Here is a 40-residue protein sequence, read N- to C-terminus: Alpha-conotoxin-like Lp1.6b (40 aa).

A propeptide spanning residues 1-23 is cleaved from the precursor; sequence VVLGPASDGRNAAANNKASDLIR. Residue Q24 is modified to Pyrrolidone carboxylic acid. Intrachain disulfides connect C26–C32 and C27–C39.

Belongs to the conotoxin A superfamily. In terms of tissue distribution, expressed by the venom duct.

It localises to the secreted. Alpha-conotoxins act on postsynaptic membranes, they bind to the nicotinic acetylcholine receptors (nAChR) and thus inhibit them. The protein is Alpha-conotoxin-like Lp1.6b of Conus leopardus (Leopard cone).